A 142-amino-acid polypeptide reads, in one-letter code: uncharacterized protein (142 aa).

Belongs to the GlcG family.

This is an uncharacterized protein from Citrobacter freundii.